We begin with the raw amino-acid sequence, 453 residues long: uncharacterized protein (453 aa).

The protein to yeast RIT1.

This is an uncharacterized protein from Schizosaccharomyces pombe (strain 972 / ATCC 24843) (Fission yeast).